The sequence spans 282 residues: Probable porphobilinogen deaminase (282 aa).

S-(dipyrrolylmethanemethyl)cysteine is present on C233.

The protein belongs to the HMBS family. Dipyrromethane serves as cofactor.

The catalysed reaction is 4 porphobilinogen + H2O = hydroxymethylbilane + 4 NH4(+). It participates in porphyrin-containing compound metabolism; protoporphyrin-IX biosynthesis; coproporphyrinogen-III from 5-aminolevulinate: step 2/4. Its function is as follows. Tetrapolymerization of the monopyrrole PBG into the hydroxymethylbilane pre-uroporphyrinogen in several discrete steps. The chain is Probable porphobilinogen deaminase from Picrophilus torridus (strain ATCC 700027 / DSM 9790 / JCM 10055 / NBRC 100828 / KAW 2/3).